The primary structure comprises 130 residues: Serum amyloid A protein (130 aa).

The first 18 residues, 1–18 (MKLFTGLILCSLVLGVHS), serve as a signal peptide directing secretion. A Pyrrolidone carboxylic acid modification is found at Q19. Positions 86-130 (TDPLFKGTTSGQGQEDSRADQAANEWGRSGKDPNHFRPAGLPDKY) are disordered.

Belongs to the SAA family. Post-translationally, this protein is the precursor of amyloid protein A, which is formed by the removal of residues from the C-terminal end. As to expression, expressed by the liver; secreted in plasma.

Its subcellular location is the secreted. Functionally, major acute phase reactant. Apolipoprotein of the HDL complex. The polypeptide is Serum amyloid A protein (SAA1) (Bos taurus (Bovine)).